Consider the following 465-residue polypeptide: tRNA (guanine(37)-N(1))-methyltransferase (465 aa).

The transit peptide at 1 to 20 (MDKNSQLRDMNLFRAPAARA) directs the protein to the mitochondrion. Residues H238 and 304–305 (DG) contribute to the S-adenosyl-L-methionine site. The tract at residues 326 to 345 (AVIKPPRPPRKSAAPPPEPV) is disordered. N359 contributes to the S-adenosyl-L-methionine binding site.

It belongs to the class I-like SAM-binding methyltransferase superfamily. TRM5/TYW2 family. In terms of assembly, monomer.

The protein localises to the mitochondrion matrix. It is found in the nucleus. The protein resides in the cytoplasm. It carries out the reaction guanosine(37) in tRNA + S-adenosyl-L-methionine = N(1)-methylguanosine(37) in tRNA + S-adenosyl-L-homocysteine + H(+). In terms of biological role, specifically methylates the N1 position of guanosine-37 in various cytoplasmic and mitochondrial tRNAs. Methylation is not dependent on the nature of the nucleoside 5' of the target nucleoside. This is the first step in the biosynthesis of wybutosine (yW), a modified base adjacent to the anticodon of tRNAs and required for accurate decoding. The protein is tRNA (guanine(37)-N(1))-methyltransferase of Fusarium vanettenii (strain ATCC MYA-4622 / CBS 123669 / FGSC 9596 / NRRL 45880 / 77-13-4) (Fusarium solani subsp. pisi).